We begin with the raw amino-acid sequence, 115 residues long: NADH-ubiquinone oxidoreductase chain 3 (115 aa).

3 consecutive transmembrane segments (helical) span residues 3–23 (FVLA…LTFW), 55–75 (FFLV…LLPL), and 84–104 (LPLM…GLTY).

The protein belongs to the complex I subunit 3 family. In terms of assembly, core subunit of respiratory chain NADH dehydrogenase (Complex I) which is composed of 45 different subunits. Interacts with TMEM186. Interacts with TMEM242.

It localises to the mitochondrion inner membrane. It carries out the reaction a ubiquinone + NADH + 5 H(+)(in) = a ubiquinol + NAD(+) + 4 H(+)(out). In terms of biological role, core subunit of the mitochondrial membrane respiratory chain NADH dehydrogenase (Complex I) which catalyzes electron transfer from NADH through the respiratory chain, using ubiquinone as an electron acceptor. Essential for the catalytic activity of complex I. The chain is NADH-ubiquinone oxidoreductase chain 3 from Pongo pygmaeus (Bornean orangutan).